The following is a 333-amino-acid chain: uncharacterized protein (333 aa).

Residues 67 to 274 (HFYPTTQVVS…LEMARNLAIE (208 aa)) enclose the Radical SAM core domain. The [4Fe-4S] cluster site is built by Cys82, Cys86, and Cys89.

[4Fe-4S] cluster serves as cofactor.

This is an uncharacterized protein from Methanocaldococcus jannaschii (strain ATCC 43067 / DSM 2661 / JAL-1 / JCM 10045 / NBRC 100440) (Methanococcus jannaschii).